The chain runs to 336 residues: tRNA N6-adenosine threonylcarbamoyltransferase (336 aa).

Fe cation is bound by residues His112 and His116. Residues Leu136–Gly140, Asp169, Gly182, and Asn276 each bind substrate. Position 304 (Asp304) interacts with Fe cation.

The protein belongs to the KAE1 / TsaD family. It depends on Fe(2+) as a cofactor.

It localises to the cytoplasm. It carries out the reaction L-threonylcarbamoyladenylate + adenosine(37) in tRNA = N(6)-L-threonylcarbamoyladenosine(37) in tRNA + AMP + H(+). Required for the formation of a threonylcarbamoyl group on adenosine at position 37 (t(6)A37) in tRNAs that read codons beginning with adenine. Is involved in the transfer of the threonylcarbamoyl moiety of threonylcarbamoyl-AMP (TC-AMP) to the N6 group of A37, together with TsaE and TsaB. TsaD likely plays a direct catalytic role in this reaction. This Francisella tularensis subsp. holarctica (strain FTNF002-00 / FTA) protein is tRNA N6-adenosine threonylcarbamoyltransferase.